The sequence spans 423 residues: Oligopeptide transport ATP-binding protein OppD (423 aa).

Residues 24 to 309 form the ABC transporter domain; it reads IRDLHVSFKV…PVHPYTWALM (286 aa). 58–65 contributes to the ATP binding site; sequence GESGSGKS. The disordered stretch occupies residues 398–423; it reads AIKMPSQPVKQPKSNGNKKTKTKSAR. Positions 413 to 423 are enriched in basic residues; the sequence is GNKKTKTKSAR.

It belongs to the ABC transporter superfamily. The complex is composed of two ATP-binding proteins (OppD and OppF), two transmembrane proteins (OppB and OppC) and a solute-binding protein (OppA).

It localises to the cell membrane. The catalysed reaction is a [peptide](out) + ATP + H2O = a [peptide](in) + ADP + phosphate + H(+). Functionally, part of the ABC transporter complex OppABCDF involved in the uptake of oligopeptides. Probably responsible for energy coupling to the transport system. This is Oligopeptide transport ATP-binding protein OppD (oppD) from Mycoplasma pneumoniae (strain ATCC 29342 / M129 / Subtype 1) (Mycoplasmoides pneumoniae).